The chain runs to 294 residues: Xyloglucan endotransglucosylase protein 34 (294 aa).

The N-terminal stretch at M1–G22 is a signal peptide. One can recognise a GH16 domain in the interval A23 to Y221. E107 (nucleophile) is an active-site residue. E111 serves as the catalytic Proton donor. E111 provides a ligand contact to xyloglucan. N115 carries N-linked (GlcNAc...) asparagine glycosylation. Residues Q124 to N126, D134 to E136, D200 to W201, and G205 each bind xyloglucan. Cystine bridges form between C229–C238 and C275–C288. Residue R280 coordinates xyloglucan.

It belongs to the glycosyl hydrolase 16 family. XTH group 1 subfamily. Contains at least one intrachain disulfide bond essential for its enzymatic activity. Post-translationally, N-glycosylated. Contains N-acetylglucosamine and mannose. Glycosylation is not essential for its catalytic activity. In terms of tissue distribution, expressed in mature gelatinous (G) cell wall layer of the tension wood fibers. Highly expressed in the outer zone of the G layer close to the secondary S2 layer. Not expressed in the mature walls of the ray cells or vessel elements (at protein level). Highest expression in both the phloem/cambium and differentiating xylem of the mature stem containing primarily secondary cell wall forming cells, in root tips and young roots. Expressed at low levels in apical bud.

Its subcellular location is the secreted. The protein localises to the cell wall. It is found in the extracellular space. The protein resides in the apoplast. It localises to the cytoplasm. The catalysed reaction is breaks a beta-(1-&gt;4) bond in the backbone of a xyloglucan and transfers the xyloglucanyl segment on to O-4 of the non-reducing terminal glucose residue of an acceptor, which can be a xyloglucan or an oligosaccharide of xyloglucan.. In terms of biological role, catalyzes xyloglucan endotransglycosylation (XET). Cleaves and religates xyloglucan polymers. Does not catalyze xyloglucan endohydrolysis (XEH). Involved in early phases of secondary (S) cell wall formation in fibers of the xylem and phloem vascular tissues of wood stems. May play a role in restructuring primary cell walls, possibly creating and reinforcing the connections between the primary and S cell wall layers. Functions in the gelatinous (G) layers of the tension wood fibers that are involved in bending of the wood stems. May play a role in G fiber shrinking by repairing broken xyloglucan cross-links between G and S2 cell wall layers via its XET activity to maintain connections between the layers. This Populus tremula x Populus tremuloides (Hybrid aspen) protein is Xyloglucan endotransglucosylase protein 34.